Here is a 1004-residue protein sequence, read N- to C-terminus: MNKKVVLSVLSTTLVASVAASAFAAPKDGIYIGGNIKKYYSTDVLFEMTPQAKATYASELNAMASDFNNVVFVDYKGKGASIEELFTKGSKVALGEPLKKEDFADLYKVVNKDGSSTATEDARAKVDPTPTGDLNVESVSANNLKEVVVTFDKAVDADTAGDKAYYTFTANKLAVDKVTVSGKTVVLTLAAKAENQASYELNVDGIKGLVKTTKEVKFFDNTTPTVAAVAAIGPKQVKVTFSEPLSAKPSFSVNNGAIAVVADNFVEGTKEVILTLGAQPTASTNTVTVEGGADYASYKVEKVTKDFTVVADTTPPTVSVKKASAKQVVLEFSEDVQNVQDKNVVFYHTTKGHEGYKGTILGVDGKEVTISFVNPLPEGQFKIFVDYVVDNGTQISDLWGNKLPEQVITGTFAADTTPPTVTKVEAKTNTEIHVTFSETVNGADNKANFTLKGVTGNVIPLTKAEVVDAAKNIYKVVTTEPLNGGSYYLTVKGIEDASKNKLVEYTATVAVADTVPPNVKDLDPATPGTDAQLISPTKVKIAFTEPMDKASIENKNNYMFNGFNLDSKVTLTATDSNTAVVVDFTNVVGFNGFKNGDAISVGRVLDTAGNPKTEMQTKVNLPNSVSAPLFDKAEVTGKNTVKLYFKELIINAKADDFAVDNGEGYKAVNSISNDVVENKSVITLTTGNDLPTTAAGVKVKTVGEVDAKNQYGVAVALTDVPADDKIGPNWLKAETVDTNNNGKIDQFKLTFSEALYVASVQDSDFRIEGYTIAGVETKGEVVTIKVTELDIDDSDATPTVAVIGSVEDLKRNASGPFEPQKAIDGVSAPDKEAPVVTGVEAGKTYNTAVTPDSADKDIKTVVLKKDGKELAGYALKTPISENGSYELVVTDNAGNTTTVKFKVDIPAEDKKAPEIKTVTDDKVAVADAPKWEAPKATATDDVDGDISDKIAVTYSSEDAGSKVTDLASAQTHLGTAGNTVKVTYNVTDKAGNPATAVSATFTAI.

The first 24 residues, 1–24, serve as a signal peptide directing secretion; it reads MNKKVVLSVLSTTLVASVAASAFA.

The outer cell wall layer is composed of subunits of the outer cell wall protein. These proteins form a hexagonal array with a lattice constant of 14.5 nm in the outer cell wall layers.

It localises to the secreted. The protein resides in the cell wall. The protein localises to the S-layer. The outer wall protein binds to the middle cell wall protein. This Brevibacillus brevis (strain 47 / JCM 6285 / NBRC 100599) protein is Outer cell wall protein.